A 356-amino-acid chain; its full sequence is Histidinol-phosphate aminotransferase (356 aa).

The residue at position 214 (Lys214) is an N6-(pyridoxal phosphate)lysine.

The protein belongs to the class-II pyridoxal-phosphate-dependent aminotransferase family. Histidinol-phosphate aminotransferase subfamily. Homodimer. Requires pyridoxal 5'-phosphate as cofactor.

It carries out the reaction L-histidinol phosphate + 2-oxoglutarate = 3-(imidazol-4-yl)-2-oxopropyl phosphate + L-glutamate. It participates in amino-acid biosynthesis; L-histidine biosynthesis; L-histidine from 5-phospho-alpha-D-ribose 1-diphosphate: step 7/9. This chain is Histidinol-phosphate aminotransferase, found in Escherichia coli O45:K1 (strain S88 / ExPEC).